A 266-amino-acid polypeptide reads, in one-letter code: Putative carbamate hydrolase RutD (266 aa).

The protein belongs to the AB hydrolase superfamily. Hydrolase RutD family.

It catalyses the reaction carbamate + 2 H(+) = NH4(+) + CO2. Involved in pyrimidine catabolism. May facilitate the hydrolysis of carbamate, a reaction that can also occur spontaneously. This chain is Putative carbamate hydrolase RutD, found in Escherichia coli O7:K1 (strain IAI39 / ExPEC).